The sequence spans 346 residues: Protein-glutamate methylesterase/protein-glutamine glutaminase (346 aa).

One can recognise a Response regulatory domain in the interval 6 to 123 (KVLVVDDSAF…SLDLEKVRDL (118 aa)). The residue at position 57 (D57) is a 4-aspartylphosphate. The CheB-type methylesterase domain maps to 155–346 (PFDKTIIVIG…ADSIVRQCKR (192 aa)). Catalysis depends on residues S166, H193, and D289.

It belongs to the CheB family. Post-translationally, phosphorylated by CheA. Phosphorylation of the N-terminal regulatory domain activates the methylesterase activity.

The protein localises to the cytoplasm. It carries out the reaction [protein]-L-glutamate 5-O-methyl ester + H2O = L-glutamyl-[protein] + methanol + H(+). It catalyses the reaction L-glutaminyl-[protein] + H2O = L-glutamyl-[protein] + NH4(+). Its function is as follows. Involved in chemotaxis. Part of a chemotaxis signal transduction system that modulates chemotaxis in response to various stimuli. Catalyzes the demethylation of specific methylglutamate residues introduced into the chemoreceptors (methyl-accepting chemotaxis proteins or MCP) by CheR. Also mediates the irreversible deamidation of specific glutamine residues to glutamic acid. This is Protein-glutamate methylesterase/protein-glutamine glutaminase from Halalkalibacterium halodurans (strain ATCC BAA-125 / DSM 18197 / FERM 7344 / JCM 9153 / C-125) (Bacillus halodurans).